The following is a 134-amino-acid chain: Phospholipase A2 (134 aa).

Residues tryptophan 8, glycine 10, and glycine 12 each contribute to the Ca(2+) site. 5 disulfide bridges follow: cysteine 9–cysteine 31, cysteine 30–cysteine 70, cysteine 37–cysteine 63, cysteine 61–cysteine 95, and cysteine 105–cysteine 113. A glycan (N-linked (GlcNAc...) asparagine) is linked at asparagine 13. Histidine 34 is an active-site residue. A Ca(2+)-binding site is contributed by aspartate 35. Residue aspartate 64 is part of the active site.

Belongs to the phospholipase A2 family. Group III subfamily. Ca(2+) serves as cofactor. As to expression, expressed by the venom gland.

The protein resides in the secreted. It carries out the reaction a 1,2-diacyl-sn-glycero-3-phosphocholine + H2O = a 1-acyl-sn-glycero-3-phosphocholine + a fatty acid + H(+). PLA2 catalyzes the calcium-dependent hydrolysis of the 2-acyl groups in 3-sn-phosphoglycerides. This chain is Phospholipase A2, found in Apis dorsata (Giant honeybee).